Reading from the N-terminus, the 138-residue chain is uncharacterized protein (138 aa).

This is an uncharacterized protein from Caenorhabditis elegans.